Here is a 286-residue protein sequence, read N- to C-terminus: CDP-diacylglycerol--serine O-phosphatidyltransferase (286 aa).

The next 6 membrane-spanning stretches (helical) occupy residues I15–A35, I74–S94, M95–L115, E135–L155, G167–M187, and L207–I227.

Belongs to the CDP-alcohol phosphatidyltransferase class-I family.

It is found in the cell membrane. The catalysed reaction is a CDP-1,2-diacyl-sn-glycerol + L-serine = a 1,2-diacyl-sn-glycero-3-phospho-L-serine + CMP + H(+). This Mycobacterium tuberculosis (strain ATCC 25618 / H37Rv) protein is CDP-diacylglycerol--serine O-phosphatidyltransferase (pssA).